The sequence spans 146 residues: Endoribonuclease YbeY (146 aa).

Positions 108, 112, and 118 each coordinate Zn(2+).

The protein belongs to the endoribonuclease YbeY family. It depends on Zn(2+) as a cofactor.

The protein localises to the cytoplasm. In terms of biological role, single strand-specific metallo-endoribonuclease involved in late-stage 70S ribosome quality control and in maturation of the 3' terminus of the 16S rRNA. The polypeptide is Endoribonuclease YbeY (Aster yellows witches'-broom phytoplasma (strain AYWB)).